The sequence spans 88 residues: MANIKSKIKNISRIETARVKNAAIKSRVKKAIRKAREAILENSPKAQELVNKAHHEIGKAVSKGVMHLNKGARKSSRLDLFYNKTKTQ.

It belongs to the bacterial ribosomal protein bS20 family.

Binds directly to 16S ribosomal RNA. In Mycoplasmopsis synoviae (strain 53) (Mycoplasma synoviae), this protein is Small ribosomal subunit protein bS20.